We begin with the raw amino-acid sequence, 321 residues long: MKIRAHHKIATAAACVALLASACSGSDKPQSTTAEGFPETITLAAIPAENSSDLKASYDPLIKMLEKQTGSKVEFVQASDYAGVVEGMIAGNVDLAFFGPFAYVVAGVNGAKMTPLGAVIKDEGGAPGYQSYGLARADEDNINGLKDFAGKKVCFVDPGSTSGFLYPTAGLIEEGVVKSGSEADISAAMSPIFAGGHDSSALAIANGDCDAGFAFDTMVDKTMIDKGDLKPGQLKTVWKSDMIAGSVFAANDALGPEVIDKLKTMFAQDANVKSFEEEGFCEGDACRITDERAWGVVPVTDADYDGVRHVCDVTGSEKCKG.

The first 22 residues, 1-22 (MKIRAHHKIATAAACVALLASA), serve as a signal peptide directing secretion. Cysteine 23 carries the N-palmitoyl cysteine lipid modification. The S-diacylglycerol cysteine moiety is linked to residue cysteine 23.

The protein belongs to the phosphate/phosphite/phosphonate binding protein family. The complex is composed of two ATP-binding proteins (PhnC), two transmembrane proteins (PhnE) and a solute-binding protein (PhnD).

Its subcellular location is the cell membrane. Part of the ABC transporter complex PhnCDE involved in phosphate import. Responsible for phosphate binding. The sequence is that of Phosphate-import protein PhnD (phnD) from Mycolicibacterium smegmatis (strain ATCC 700084 / mc(2)155) (Mycobacterium smegmatis).